We begin with the raw amino-acid sequence, 128 residues long: uncharacterized protein (128 aa).

This is an uncharacterized protein from Haemophilus influenzae (strain ATCC 51907 / DSM 11121 / KW20 / Rd).